The following is a 739-amino-acid chain: Phosphoribosylformylglycinamidine synthase subunit PurL (739 aa).

H54 is an active-site residue. 2 residues coordinate ATP: Y57 and K96. E98 contributes to the Mg(2+) binding site. Residues S99–H102 and R121 each bind substrate. The Proton acceptor role is filled by H100. D122 contacts Mg(2+). Q245 lines the substrate pocket. D273 is a binding site for Mg(2+). E317–Q319 contributes to the substrate binding site. Residues D500 and G537 each coordinate ATP. N538 is a Mg(2+) binding site. S540 is a substrate binding site.

The protein belongs to the FGAMS family. In terms of assembly, monomer. Part of the FGAM synthase complex composed of 1 PurL, 1 PurQ and 2 PurS subunits.

Its subcellular location is the cytoplasm. It catalyses the reaction N(2)-formyl-N(1)-(5-phospho-beta-D-ribosyl)glycinamide + L-glutamine + ATP + H2O = 2-formamido-N(1)-(5-O-phospho-beta-D-ribosyl)acetamidine + L-glutamate + ADP + phosphate + H(+). It functions in the pathway purine metabolism; IMP biosynthesis via de novo pathway; 5-amino-1-(5-phospho-D-ribosyl)imidazole from N(2)-formyl-N(1)-(5-phospho-D-ribosyl)glycinamide: step 1/2. In terms of biological role, part of the phosphoribosylformylglycinamidine synthase complex involved in the purines biosynthetic pathway. Catalyzes the ATP-dependent conversion of formylglycinamide ribonucleotide (FGAR) and glutamine to yield formylglycinamidine ribonucleotide (FGAM) and glutamate. The FGAM synthase complex is composed of three subunits. PurQ produces an ammonia molecule by converting glutamine to glutamate. PurL transfers the ammonia molecule to FGAR to form FGAM in an ATP-dependent manner. PurS interacts with PurQ and PurL and is thought to assist in the transfer of the ammonia molecule from PurQ to PurL. The protein is Phosphoribosylformylglycinamidine synthase subunit PurL of Bacillus cereus (strain ATCC 10987 / NRS 248).